The sequence spans 230 residues: Ureidoacrylate amidohydrolase RutB (230 aa).

Catalysis depends on D24, which acts as the Proton acceptor. K133 is an active-site residue. The active-site Nucleophile is C166.

The protein belongs to the isochorismatase family. RutB subfamily.

The enzyme catalyses (Z)-3-ureidoacrylate + H2O + H(+) = (Z)-3-aminoacrylate + NH4(+) + CO2. The catalysed reaction is (Z)-3-ureidoacrylate + H2O = (Z)-3-aminoacrylate + carbamate + H(+). It carries out the reaction (Z)-2-methylureidoacrylate + H2O + H(+) = (Z)-2-methylaminoacrylate + NH4(+) + CO2. Its function is as follows. Hydrolyzes ureidoacrylate to form aminoacrylate and carbamate. The carbamate hydrolyzes spontaneously, thereby releasing one of the nitrogen atoms of the pyrimidine ring as ammonia and one of its carbon atoms as CO2. This Escherichia coli O157:H7 protein is Ureidoacrylate amidohydrolase RutB.